A 1786-amino-acid polypeptide reads, in one-letter code: Protein TIC 214 (1786 aa).

Helical transmembrane passes span 19-39 (IINS…FSIG), 68-88 (FIAG…HLAL), 91-111 (PHTI…WNNH), 133-153 (VFLN…SSML), 176-196 (VGWL…LVWI), and 227-247 (IFSI…PSPI). Residues 1007–1046 (SLSEKKIKNLIDRKKTIRNQIEEISKEKQNLTNSCTKLRY) are a coiled coil.

It belongs to the TIC214 family. In terms of assembly, part of the Tic complex. Component of the 1-MD complex, composed of TIC20-I, TIC214, TIC100 and TIC56. Interacts with the translocating preproteins. Hydrolysis of ATP is essential for the formation of this complex. The 1-MD complex interacts with TIC21.

The protein resides in the plastid. Its subcellular location is the chloroplast inner membrane. Its function is as follows. Involved in protein precursor import into chloroplasts. May be part of an intermediate translocation complex acting as a protein-conducting channel at the inner envelope. The sequence is that of Protein TIC 214 from Arabidopsis thaliana (Mouse-ear cress).